A 471-amino-acid polypeptide reads, in one-letter code: UDP-N-acetylmuramoylalanine--D-glutamate ligase (471 aa).

122 to 128 (GTNGKTT) contacts ATP.

This sequence belongs to the MurCDEF family.

Its subcellular location is the cytoplasm. The enzyme catalyses UDP-N-acetyl-alpha-D-muramoyl-L-alanine + D-glutamate + ATP = UDP-N-acetyl-alpha-D-muramoyl-L-alanyl-D-glutamate + ADP + phosphate + H(+). It functions in the pathway cell wall biogenesis; peptidoglycan biosynthesis. Cell wall formation. Catalyzes the addition of glutamate to the nucleotide precursor UDP-N-acetylmuramoyl-L-alanine (UMA). The sequence is that of UDP-N-acetylmuramoylalanine--D-glutamate ligase from Streptomyces coelicolor (strain ATCC BAA-471 / A3(2) / M145).